The primary structure comprises 261 residues: 3-methyl-2-oxobutanoate hydroxymethyltransferase (261 aa).

The Mg(2+) site is built by aspartate 44 and aspartate 83. Residues 44–45 (DS), aspartate 83, and lysine 113 each bind 3-methyl-2-oxobutanoate. Glutamate 115 contributes to the Mg(2+) binding site. The active-site Proton acceptor is glutamate 183.

Belongs to the PanB family. As to quaternary structure, homodecamer; pentamer of dimers. Mg(2+) is required as a cofactor.

Its subcellular location is the cytoplasm. It catalyses the reaction 3-methyl-2-oxobutanoate + (6R)-5,10-methylene-5,6,7,8-tetrahydrofolate + H2O = 2-dehydropantoate + (6S)-5,6,7,8-tetrahydrofolate. It functions in the pathway cofactor biosynthesis; (R)-pantothenate biosynthesis; (R)-pantoate from 3-methyl-2-oxobutanoate: step 1/2. In terms of biological role, catalyzes the reversible reaction in which hydroxymethyl group from 5,10-methylenetetrahydrofolate is transferred onto alpha-ketoisovalerate to form ketopantoate. This is 3-methyl-2-oxobutanoate hydroxymethyltransferase from Cyanothece sp. (strain PCC 7425 / ATCC 29141).